Here is a 92-residue protein sequence, read N- to C-terminus: Evasin P942 (92 aa).

An N-terminal signal peptide occupies residues 1–26 (MEVKTFAFLQIAVLIALGLHLAPAGS). 3 disulfides stabilise this stretch: Cys-44-Cys-63, Cys-48-Cys-65, and Cys-59-Cys-76. Residue Asn-47 is glycosylated (N-linked (GlcNAc...) asparagine). An N-linked (GlcNAc...) asparagine glycan is attached at Asn-70.

It is found in the secreted. Functionally, salivary chemokine-binding protein which binds to host chemokines CXCL1, CXCL2, CXCL3, CXCL4, CXCL5, CXCL6, CXCL10, CXCL11 and CXCL13. The polypeptide is Evasin P942 (Ixodes ricinus (Common tick)).